Reading from the N-terminus, the 205-residue chain is Meiotic nuclear division protein 1 homolog (205 aa).

A coiled-coil region spans residues 79 to 147 (LHARKRKLET…CADLEKYKEC (69 aa)).

The protein belongs to the MND1 family.

It localises to the nucleus. In terms of biological role, required for proper homologous chromosome pairing and efficient cross-over and intragenic recombination during meiosis. Stimulates both dmc1- and rad51-mediated homologous strand assimilation, which is required for the resolution of meiotic double-strand breaks. The protein is Meiotic nuclear division protein 1 homolog of Xenopus laevis (African clawed frog).